Consider the following 312-residue polypeptide: Nicotinamide adenine dinucleotide transporter 1, chloroplastic (312 aa).

Solcar repeat units lie at residues 11 to 103 (KNVL…LKSF), 111 to 199 (LSVG…IKVY), and 211 to 299 (LNAR…VHRF). 6 helical membrane-spanning segments follow: residues 17-37 (AAAG…LDVI), 78-98 (GLSP…TMYD), 117-137 (VLAA…LWVV), 171-191 (GLYS…IQFP), 216-232 (VAVA…TLTY), and 271-293 (FYRG…FTSF).

It belongs to the mitochondrial carrier (TC 2.A.29) family. Highly expressed in young leaf mesophyll cells, root tips and at the branches of adventitious roots. Low expression in all flower tissues and not detected in siliques and seeds.

The protein localises to the plastid. It localises to the chloroplast membrane. Its activity is regulated as follows. Inhibited by pyridoxal 5'-phosphate, bathophenanthroline, tannic acid, mersalyl, mercuric chloride, p-hydroxymercuribenzoate, p-hydroxymercuribenzoate sulfonate, bromocresol purple and N-ethylmaleimide. Mediates the NAD(+) import into chloroplast. Favors the NAD(+)(in)/ADP or AMP(out) antiport exchange, but is also able to catalyze a low unidirectional transport (uniport) of NAD(+). Transports NAD(+), nicotinic acid adenine dinucleotide, nicotinamide mononucleotide, nicotinic acid mononucleotide, FAD, FMN, TTP, TDP, TMP, UTP, UDP, UMP, CTP, CDP, CMP, GTP, GDP, GMP, 3'-AMP, ATP, ADP, and AMP, has low transport activity with cAMP, pyrophosphate, NADH and alpha-NAD(+), and has no activity with NADP(+), NADPH, nicotinamide, nicotinic acid, adenosine, thiamine mono- or diphosphate, inorganic phosphate, CoA, folate, NaCl, malate, malonate, citrate, fumarate, aspartate, glutamate, S-adenosylmethionine, lysine, arginine, and ornithine. The protein is Nicotinamide adenine dinucleotide transporter 1, chloroplastic (NDT1) of Arabidopsis thaliana (Mouse-ear cress).